We begin with the raw amino-acid sequence, 146 residues long: Aspartate 1-decarboxylase (146 aa).

Ser25 serves as the catalytic Schiff-base intermediate with substrate; via pyruvic acid. Ser25 is subject to Pyruvic acid (Ser). Thr57 is a substrate binding site. The active-site Proton donor is Tyr58. 73 to 75 provides a ligand contact to substrate; that stretch reads GPA.

It belongs to the PanD family. In terms of assembly, heterooctamer of four alpha and four beta subunits. It depends on pyruvate as a cofactor. In terms of processing, is synthesized initially as an inactive proenzyme, which is activated by self-cleavage at a specific serine bond to produce a beta-subunit with a hydroxyl group at its C-terminus and an alpha-subunit with a pyruvoyl group at its N-terminus.

The protein resides in the cytoplasm. The enzyme catalyses L-aspartate + H(+) = beta-alanine + CO2. It participates in cofactor biosynthesis; (R)-pantothenate biosynthesis; beta-alanine from L-aspartate: step 1/1. Catalyzes the pyruvoyl-dependent decarboxylation of aspartate to produce beta-alanine. In Salinibacter ruber (strain DSM 13855 / M31), this protein is Aspartate 1-decarboxylase.